A 457-amino-acid polypeptide reads, in one-letter code: Siroheme synthase (457 aa).

A precorrin-2 dehydrogenase /sirohydrochlorin ferrochelatase region spans residues Met1–Thr204. Residues Asp22–Val23 and Leu43–Ala44 each bind NAD(+). Ser128 carries the post-translational modification Phosphoserine. The uroporphyrinogen-III C-methyltransferase stretch occupies residues Gly216–His457. Pro225 contacts S-adenosyl-L-methionine. Asp248 functions as the Proton acceptor in the catalytic mechanism. The Proton donor role is filled by Lys270. S-adenosyl-L-methionine-binding positions include Gly301–Asp303, Ile306, Thr331–Ala332, Met382, and Gly411.

This sequence in the N-terminal section; belongs to the precorrin-2 dehydrogenase / sirohydrochlorin ferrochelatase family. It in the C-terminal section; belongs to the precorrin methyltransferase family.

It carries out the reaction uroporphyrinogen III + 2 S-adenosyl-L-methionine = precorrin-2 + 2 S-adenosyl-L-homocysteine + H(+). The enzyme catalyses precorrin-2 + NAD(+) = sirohydrochlorin + NADH + 2 H(+). It catalyses the reaction siroheme + 2 H(+) = sirohydrochlorin + Fe(2+). The protein operates within cofactor biosynthesis; adenosylcobalamin biosynthesis; precorrin-2 from uroporphyrinogen III: step 1/1. It functions in the pathway cofactor biosynthesis; adenosylcobalamin biosynthesis; sirohydrochlorin from precorrin-2: step 1/1. Its pathway is porphyrin-containing compound metabolism; siroheme biosynthesis; precorrin-2 from uroporphyrinogen III: step 1/1. It participates in porphyrin-containing compound metabolism; siroheme biosynthesis; siroheme from sirohydrochlorin: step 1/1. The protein operates within porphyrin-containing compound metabolism; siroheme biosynthesis; sirohydrochlorin from precorrin-2: step 1/1. Multifunctional enzyme that catalyzes the SAM-dependent methylations of uroporphyrinogen III at position C-2 and C-7 to form precorrin-2 via precorrin-1. Then it catalyzes the NAD-dependent ring dehydrogenation of precorrin-2 to yield sirohydrochlorin. Finally, it catalyzes the ferrochelation of sirohydrochlorin to yield siroheme. The protein is Siroheme synthase of Escherichia coli O6:H1 (strain CFT073 / ATCC 700928 / UPEC).